The primary structure comprises 105 residues: Large ribosomal subunit protein uL18c (105 aa).

This sequence belongs to the universal ribosomal protein uL18 family. As to quaternary structure, part of the 50S ribosomal subunit; contacts the 5S rRNA.

It is found in the plastid. The protein resides in the chloroplast. Functionally, binds 5S rRNA, forms part of the central protuberance of the 50S subunit. In Gracilaria tenuistipitata var. liui (Red alga), this protein is Large ribosomal subunit protein uL18c (rpl18).